The primary structure comprises 241 residues: Ubiquinone biosynthesis O-methyltransferase (241 aa).

Residues arginine 46, glycine 66, aspartate 87, and methionine 131 each coordinate S-adenosyl-L-methionine.

Belongs to the methyltransferase superfamily. UbiG/COQ3 family.

The catalysed reaction is a 3-demethylubiquinol + S-adenosyl-L-methionine = a ubiquinol + S-adenosyl-L-homocysteine + H(+). The enzyme catalyses a 3-(all-trans-polyprenyl)benzene-1,2-diol + S-adenosyl-L-methionine = a 2-methoxy-6-(all-trans-polyprenyl)phenol + S-adenosyl-L-homocysteine + H(+). The protein operates within cofactor biosynthesis; ubiquinone biosynthesis. In terms of biological role, O-methyltransferase that catalyzes the 2 O-methylation steps in the ubiquinone biosynthetic pathway. The protein is Ubiquinone biosynthesis O-methyltransferase of Bordetella bronchiseptica (strain ATCC BAA-588 / NCTC 13252 / RB50) (Alcaligenes bronchisepticus).